The primary structure comprises 97 residues: Plastocyanin (97 aa).

The Plastocyanin-like domain maps to 1–97 (AEVKLGADDG…AGMKGEVTVT (97 aa)). The Cu cation site is built by histidine 37, cysteine 82, histidine 85, and methionine 90.

This sequence belongs to the plastocyanin family. It depends on Cu(2+) as a cofactor.

Its subcellular location is the plastid. It is found in the chloroplast thylakoid membrane. Its function is as follows. Participates in electron transfer between P700 and the cytochrome b6-f complex in photosystem I. This is Plastocyanin (PETE) from Daucus carota (Wild carrot).